A 770-amino-acid polypeptide reads, in one-letter code: uncharacterized protein (770 aa).

The interval 736–770 (GSGQPGQSPANVGDDPNRMVQSSASQTQIGHVFNN) is disordered. Positions 754–770 (MVQSSASQTQIGHVFNN) are enriched in polar residues.

This is an uncharacterized protein from Caenorhabditis elegans.